The sequence spans 186 residues: Membrane protein Rv1476 (186 aa).

The chain crosses the membrane as a helical span at residues 138–158 (FPWSALTIVLLIGVLAAAVGA). Positions 166–186 (RRSATSTDAAPGAGDDLNQGV) are disordered.

The protein resides in the membrane. Functionally, may affect the expression of genes linked to host macrophage apoptosis and immune response, thereby promoting the survival of M.tuberculosis in host macrophages. Overexpression of the gene increases susceptibility of the bacteria to various stresses, but promotes intracellular survival in host macrophages. It has no impact on the growth rate in vitro. Overexpression causes changes in the transcriptome of THP-1 cells, including expression of genes involved in cell proliferation, fatty acid degradation, cytokine-cytokine receptor interaction and immune response pathways. In Mycobacterium tuberculosis (strain ATCC 25618 / H37Rv), this protein is Membrane protein Rv1476.